Here is a 420-residue protein sequence, read N- to C-terminus: Tyrosine--tRNA ligase 1 (420 aa).

Tyr35 contributes to the L-tyrosine binding site. The short motif at 40 to 49 (PTAGSLHIGH) is the 'HIGH' region element. 2 residues coordinate L-tyrosine: Tyr172 and Gln176. The 'KMSKS' region motif lies at 232–236 (KFGKT). Lys235 provides a ligand contact to ATP. In terms of domain architecture, S4 RNA-binding spans 355-419 (INIAELLVKS…GKKQFRLIKL (65 aa)).

It belongs to the class-I aminoacyl-tRNA synthetase family. TyrS type 1 subfamily. In terms of assembly, homodimer.

The protein resides in the cytoplasm. It carries out the reaction tRNA(Tyr) + L-tyrosine + ATP = L-tyrosyl-tRNA(Tyr) + AMP + diphosphate + H(+). Catalyzes the attachment of tyrosine to tRNA(Tyr) in a two-step reaction: tyrosine is first activated by ATP to form Tyr-AMP and then transferred to the acceptor end of tRNA(Tyr). This is Tyrosine--tRNA ligase 1 from Pseudoalteromonas translucida (strain TAC 125).